The following is a 164-amino-acid chain: MIELLSAAETWVAVGFAILMVVFVYFGVHRTVLNALDNRRDRIKAELDEASRLKEEAAKLLADYKARAASAEREAEAIIASAKDEAERIAAEAKAKLEDFVARRTKTAEGKIAMAEAQAIADVRAAAANAAVAAASSILSQSVKGSVADELIGKGIAEVRSKLN.

The chain crosses the membrane as a helical span at residues 8 to 28 (AETWVAVGFAILMVVFVYFGV).

The protein belongs to the ATPase B chain family. F-type ATPases have 2 components, F(1) - the catalytic core - and F(0) - the membrane proton channel. F(1) has five subunits: alpha(3), beta(3), gamma(1), delta(1), epsilon(1). F(0) has three main subunits: a(1), b(2) and c(10-14). The alpha and beta chains form an alternating ring which encloses part of the gamma chain. F(1) is attached to F(0) by a central stalk formed by the gamma and epsilon chains, while a peripheral stalk is formed by the delta and b chains.

The protein resides in the cell inner membrane. F(1)F(0) ATP synthase produces ATP from ADP in the presence of a proton or sodium gradient. F-type ATPases consist of two structural domains, F(1) containing the extramembraneous catalytic core and F(0) containing the membrane proton channel, linked together by a central stalk and a peripheral stalk. During catalysis, ATP synthesis in the catalytic domain of F(1) is coupled via a rotary mechanism of the central stalk subunits to proton translocation. Its function is as follows. Component of the F(0) channel, it forms part of the peripheral stalk, linking F(1) to F(0). This is ATP synthase subunit b 1 from Rhodopseudomonas palustris (strain BisA53).